The primary structure comprises 197 residues: Recombination protein RecR (197 aa).

Residues 57–72 form a C4-type zinc finger; that stretch reads CSRCGYLTDFDPCLIC. The Toprim domain maps to 80–174; that stretch reads SLICIGEESS…KVTRLAHGLP (95 aa).

It belongs to the RecR family.

May play a role in DNA repair. It seems to be involved in an RecBC-independent recombinational process of DNA repair. It may act with RecF and RecO. The polypeptide is Recombination protein RecR (Syntrophomonas wolfei subsp. wolfei (strain DSM 2245B / Goettingen)).